The sequence spans 189 residues: Riboflavin kinase (189 aa).

Mg(2+)-binding residues include Thr42 and Asn44. Catalysis depends on Glu124, which acts as the Nucleophile.

It belongs to the flavokinase family. The cofactor is Zn(2+). It depends on Mg(2+) as a cofactor.

The catalysed reaction is riboflavin + ATP = FMN + ADP + H(+). It functions in the pathway cofactor biosynthesis; FMN biosynthesis; FMN from riboflavin (ATP route): step 1/1. Catalyzes the phosphorylation of riboflavin (vitamin B2) to form flavin mononucleotide (FMN) coenzyme. This chain is Riboflavin kinase (FMN1), found in Candida glabrata (strain ATCC 2001 / BCRC 20586 / JCM 3761 / NBRC 0622 / NRRL Y-65 / CBS 138) (Yeast).